We begin with the raw amino-acid sequence, 195 residues long: NADH-quinone oxidoreductase subunit C (195 aa).

This sequence belongs to the complex I 30 kDa subunit family. In terms of assembly, NDH-1 is composed of 14 different subunits. Subunits NuoB, C, D, E, F, and G constitute the peripheral sector of the complex.

It localises to the cell inner membrane. It carries out the reaction a quinone + NADH + 5 H(+)(in) = a quinol + NAD(+) + 4 H(+)(out). NDH-1 shuttles electrons from NADH, via FMN and iron-sulfur (Fe-S) centers, to quinones in the respiratory chain. The immediate electron acceptor for the enzyme in this species is believed to be ubiquinone. Couples the redox reaction to proton translocation (for every two electrons transferred, four hydrogen ions are translocated across the cytoplasmic membrane), and thus conserves the redox energy in a proton gradient. This chain is NADH-quinone oxidoreductase subunit C, found in Laribacter hongkongensis (strain HLHK9).